Reading from the N-terminus, the 704-residue chain is Boron transporter 1 (704 aa).

The Cytoplasmic portion of the chain corresponds to 1–35 (MEETFVPFEGIKNDLKGRLMCYKQDWTGGFKAGFR). A helical transmembrane segment spans residues 36-56 (ILAPTTYIFFASAIPVISFGE). The Extracellular segment spans residues 57-75 (QLERSTDGVLTAVQTLAST). A helical membrane pass occupies residues 76-96 (AICGMIHSIIGGQPLLILGVA). Topologically, residues 97 to 120 (EPTVIMYTFMFNFAKARPELGRDL) are cytoplasmic. A helical membrane pass occupies residues 121-141 (FLAWSGWVCVWTALMLFVLAI). The Extracellular segment spans residues 142 to 155 (CGACSIINRFTRVA). Residues 156-176 (GELFGLLIAMLFMQQAIKGLV) traverse the membrane as a helical segment. At 177–195 (DEFRIPERENQKLKEFLPS) the chain is on the cytoplasmic side. The helical transmembrane segment at 196 to 216 (WRFANGMFALVLSFGLLLTGL) threads the bilayer. The Extracellular segment spans residues 217–233 (RSRKARSWRYGTGWLRS). The helical transmembrane segment at 234–254 (LIADYGVPLMVLVWTGVSYIP) threads the bilayer. The Cytoplasmic segment spans residues 255–289 (AGDVPKGIPRRLFSPNPWSPGAYGNWTVVKEMLDV). Residues 290 to 310 (PIVYIIGAFIPASMIAVLYYF) form a helical membrane-spanning segment. The Extracellular portion of the chain corresponds to 311 to 337 (DHSVASQLAQQKEFNLRKPSSYHYDLL). The chain crosses the membrane as a helical span at residues 338 to 358 (LLGFLTLMCGLLGVPPSNGVI). The Cytoplasmic segment spans residues 359–480 (PQSPMHTKSL…STMVGGCVAA (122 aa)). Residues 481–501 (MPILKMIPTSVLWGYFAFMAI) traverse the membrane as a helical segment. Residues 502–557 (ESLPGNQFWERILLLFTAPSRRFKVLEDYHATFVETVPFKTIAMFTLFQTTYLLIC) lie on the Extracellular side of the membrane. A helical membrane pass occupies residues 558–578 (FGLTWIPIAGVMFPLMIMFLI). Residues 579–704 (PVRQYLLPRF…RSPLNQSSSN (126 aa)) are Cytoplasmic-facing. The tract at residues 641–704 (EFRHTSSPKV…RSPLNQSSSN (64 aa)) is disordered. A compositionally biased stretch (low complexity) spans 647-664 (SPKVTSSSSTPVNNRSLS).

It belongs to the anion exchanger (TC 2.A.31.3) family. As to expression, expressed in proximal side of various root cells, notably in the columella, lateral root cap, epidermis and endodermis in tip and elongation zones of the root. Also detected in the epidermis, cortex, endodermis, and stele cells of the root hair zone. Observed in cotyledons and hypocotyls.

The protein localises to the cell membrane. It is found in the endosome membrane. The protein resides in the vacuole membrane. Functionally, efflux-type boron (B) transporter for xylem loading, responsive of boron translocation from roots to shoots under boron limitation. Boron is essential for maintaining the integrity of plants cell walls. In Arabidopsis thaliana (Mouse-ear cress), this protein is Boron transporter 1.